The primary structure comprises 76 residues: MEYRKRVDALVFFSLLLLGYFAAHAHGKAKEGIMQGNGARCVVGFPPCKDNKCYCCIGGRTHARYSTMAECSHACF.

The first 27 residues, 1–27 (MEYRKRVDALVFFSLLLLGYFAAHAHG), serve as a signal peptide directing secretion. Cysteines 53 and 75 form a disulfide.

Belongs to the MEG family. In terms of tissue distribution, expressed exclusively in endosperm.

The chain is Protein MATERNALLY EXPRESSED GENE 4 (MEG4) from Zea mays (Maize).